Here is a 147-residue protein sequence, read N- to C-terminus: Diaminohydroxyphosphoribosylamino-pyrimidine deaminase (147 aa).

In terms of domain architecture, CMP/dCMP-type deaminase spans 1-123; that stretch reads MNDIFYMKRA…YLKKHGICVK (123 aa). Position 50 (His50) interacts with Zn(2+). The active-site Proton donor is the Glu52. Positions 75 and 84 each coordinate Zn(2+).

The protein belongs to the cytidine and deoxycytidylate deaminase family. It depends on Zn(2+) as a cofactor.

The catalysed reaction is 2,5-diamino-6-hydroxy-4-(5-phosphoribosylamino)-pyrimidine + H2O + H(+) = 5-amino-6-(5-phospho-D-ribosylamino)uracil + NH4(+). The protein operates within cofactor biosynthesis; riboflavin biosynthesis; 5-amino-6-(D-ribitylamino)uracil from GTP: step 2/4. The protein is Diaminohydroxyphosphoribosylamino-pyrimidine deaminase (ribD1) of Buchnera aphidicola subsp. Acyrthosiphon pisum (strain APS) (Acyrthosiphon pisum symbiotic bacterium).